Consider the following 336-residue polypeptide: Mediator of RNA polymerase II transcription subunit 4 (336 aa).

Disordered regions lie at residues Met-1 to Val-45 and Asn-59 to Ala-85. Residues Gln-154–Gln-192 adopt a coiled-coil conformation. Positions Pro-281–Asp-336 are disordered. Positions Ile-325–Asp-336 are enriched in acidic residues.

The protein belongs to the Mediator complex subunit 4 family. As to quaternary structure, component of the Mediator complex.

The protein localises to the nucleus. Its function is as follows. Component of the Mediator complex, a coactivator involved in the regulated transcription of nearly all RNA polymerase II-dependent genes. Mediator functions as a bridge to convey information from gene-specific regulatory proteins to the basal RNA polymerase II transcription machinery. Mediator is recruited to promoters by direct interactions with regulatory proteins and serves as a scaffold for the assembly of a functional preinitiation complex with RNA polymerase II and the general transcription factors. The sequence is that of Mediator of RNA polymerase II transcription subunit 4 (MED4) from Yarrowia lipolytica (strain CLIB 122 / E 150) (Yeast).